Consider the following 131-residue polypeptide: Global transcriptional regulator Spx (131 aa).

The short motif at 10-13 (CTSC) is the CXXC element. Residues Cys-10 and Cys-13 are joined by a disulfide bond.

Belongs to the ArsC family. Spx subfamily. In terms of assembly, interacts with the C-terminal domain of the alpha subunit of the RNAP. A single Spx monomer interacts with RNAP to form the transcription activation complex. Interacts with the adapter protein SpxH/YjbH.

It is found in the cytoplasm. With respect to regulation, under non-stress conditions, Spx is degraded by ClpXP and, to a lesser extent, by ClpCP. Efficient dedradation by ClpXP requires the adapter protein SpxH/YjbH. Binding to SpxH/YjbH reduces the overall conformational flexibility of Spx and stabilizes the C-terminal ClpX recognition region of Spx. In addition, activity is modulated by the formation of a disulfide bound within the N-terminal Cys-X-X-Cys (CXXC) motif, which is required for the transcriptional activation of trxA and trxB, or for the activation of msrAB operon expression following paraquat oxidative stress. However, it seems that formation of the disulfide bound is not essential for induction of all Spx-controlled genes, as for example the case of BSH biosynthesis genes. Similarly, induction of the Spx regulon during cell wall stress is not accompanied by oxidation of the disulfide switch, but requires Spx stabilization by the anti-adapter protein SpxO/YirB. Global transcriptional regulator that plays a key role in stress response and exerts either positive or negative regulation of genes. Acts by interacting with the C-terminal domain of the alpha subunit of the RNA polymerase (RNAP). This interaction can enhance binding of RNAP to the promoter region of target genes and stimulate their transcription, or block interaction of RNAP with activator proteins and repress transcription. Exhibits no DNA-binding activity. In terms of biological role, induces the expression of a large number of genes in response to a variety of stress conditions, such as disulfide, heat and cell wall stress, while concurrently repressing transcription of genes involved in various developmental and growth-related pathways during periods of extreme stress. Functions in the oxidative stress response via induction of the transcription of thioredoxin (trxA) and thioredoxin reductase (trxB) during thiol-specific oxidative (disulfide) stress. Mediates response to oxidative stress caused by paraquat (PQ) via induction of the methionine sulfoxide reductase genes, msrA and msrB. Also acts as a transcriptional activator of the bacillithiol (BSH) biosynthesis genes in response to oxidizing conditions and thio-reactive compounds. Involved in heat stress response and thermotolerance development, which results in diminished cellular protein aggregates. Plays an important adaptive role in the cell wall stress response. Participates in sulfate-dependent control of organosulfur metabolism. Negatively controls, via CymR, the expression of the organosulfur utilization operons ytmI, yxeI and ssu, and directly activates yrrT operon expression during growth in medium containing methionine as sole sulfur source. Negatively affects competence and sporulation. Inhibits biofilm formation in response to disulfide stress by repressing biofilm matrix genes. In Bacillus subtilis (strain 168), this protein is Global transcriptional regulator Spx.